Reading from the N-terminus, the 283-residue chain is Elongation factor Ts (283 aa).

An involved in Mg(2+) ion dislocation from EF-Tu region spans residues 80-83; sequence TDFV.

Belongs to the EF-Ts family.

It localises to the cytoplasm. Associates with the EF-Tu.GDP complex and induces the exchange of GDP to GTP. It remains bound to the aminoacyl-tRNA.EF-Tu.GTP complex up to the GTP hydrolysis stage on the ribosome. The chain is Elongation factor Ts from Actinobacillus pleuropneumoniae serotype 3 (strain JL03).